The primary structure comprises 87 residues: uncharacterized protein (87 aa).

Transmembrane regions (helical) follow at residues 25–45 (LVAAVIAVTMALWLGVQWLGG) and 53–73 (YAFLADLAAIGALIWSLLVTF).

The protein localises to the cell membrane. This is an uncharacterized protein from Paracoccus denitrificans.